A 1221-amino-acid polypeptide reads, in one-letter code: Probable serine/threonine-protein kinase DDB_G0286465 (1221 aa).

Disordered stretches follow at residues 1-37 (MTLRLDTSLKRGASRNIPPIPTFSSVSNENLSSSPYT), 104-133 (FSPSTGRTKNNNNNNNNNINNNNYKKNDNQ), and 173-263 (ENNS…NNNE). Composition is skewed to low complexity over residues 24 to 37 (SSVSNENLSSSPYT), 112 to 127 (KNNNNNNNNNINNNNY), 173 to 192 (ENNSQNNNNNKYQINNNMQK), and 204 to 263 (NNNN…NNNE). A Protein kinase domain is found at 186–627 (INNNMQKTGG…PYKLLDHPFF (442 aa)). 192 to 200 (KTGGRNGSV) is a binding site for ATP. Residue Lys271 coordinates ATP. Residues 324 to 344 (NVNNNNSNNNNNNSNNNITNS) are compositionally biased toward low complexity. Residues 324-346 (NVNNNNSNNNNNNSNNNITNSRY) form a disordered region. The Proton acceptor role is filled by Asp448. 2 stretches are compositionally biased toward low complexity: residues 538 to 550 (SPSSSSTTSTSTS) and 559 to 584 (DSSSSASSSSSSSSSSSSSSSSSLPK). Disordered stretches follow at residues 538 to 604 (SPSS…PEKR), 712 to 782 (PNLS…KEKL), 823 to 858 (KFEKKQRQIQDSEKVNKNEEENQTKDDADNISPPLP), 959 to 1008 (KENI…SYCN), and 1105 to 1152 (KKQE…QQEK). Residues 591–604 (RSKDNQSKLDPEKR) show a composition bias toward basic and acidic residues. Positions 725–738 (KKQLQQYQQQQKQQ) are enriched in low complexity. Acidic residues predominate over residues 746–756 (DDEEEKEEEEK). Basic and acidic residues-rich tracts occupy residues 757–769 (EKEKEKEKEKEKE) and 823–850 (KFEKKQRQIQDSEKVNKNEEENQTKDDA). The span at 959 to 993 (KENIINFHNNNNNNNNNNNNNNNNNNNNNNNNNNN) shows a compositional bias: low complexity.

It belongs to the protein kinase superfamily. Ser/Thr protein kinase family.

It catalyses the reaction L-seryl-[protein] + ATP = O-phospho-L-seryl-[protein] + ADP + H(+). The enzyme catalyses L-threonyl-[protein] + ATP = O-phospho-L-threonyl-[protein] + ADP + H(+). In Dictyostelium discoideum (Social amoeba), this protein is Probable serine/threonine-protein kinase DDB_G0286465.